The following is an 89-amino-acid chain: Small ribosomal subunit protein uS15 (89 aa).

It belongs to the universal ribosomal protein uS15 family. Part of the 30S ribosomal subunit. Forms a bridge to the 50S subunit in the 70S ribosome, contacting the 23S rRNA.

One of the primary rRNA binding proteins, it binds directly to 16S rRNA where it helps nucleate assembly of the platform of the 30S subunit by binding and bridging several RNA helices of the 16S rRNA. Functionally, forms an intersubunit bridge (bridge B4) with the 23S rRNA of the 50S subunit in the ribosome. This Orientia tsutsugamushi (strain Boryong) (Rickettsia tsutsugamushi) protein is Small ribosomal subunit protein uS15.